Reading from the N-terminus, the 229-residue chain is Protein GrpE (229 aa).

Disordered stretches follow at residues 1–49 and 207–229; these read MTEG…SANS and DSTAKTEQGELGDNVTPHKEDGD. Basic and acidic residues predominate over residues 13-24; that stretch reads TDKRRIDPDTGE.

Belongs to the GrpE family. As to quaternary structure, homodimer.

Its subcellular location is the cytoplasm. Functionally, participates actively in the response to hyperosmotic and heat shock by preventing the aggregation of stress-denatured proteins, in association with DnaK and GrpE. It is the nucleotide exchange factor for DnaK and may function as a thermosensor. Unfolded proteins bind initially to DnaJ; upon interaction with the DnaJ-bound protein, DnaK hydrolyzes its bound ATP, resulting in the formation of a stable complex. GrpE releases ADP from DnaK; ATP binding to DnaK triggers the release of the substrate protein, thus completing the reaction cycle. Several rounds of ATP-dependent interactions between DnaJ, DnaK and GrpE are required for fully efficient folding. This Mycobacterium leprae (strain TN) protein is Protein GrpE.